The sequence spans 538 residues: Syncytin-1 (538 aa).

Positions 1-20 (MALPYHIFLFTVLLPSFTLT) are cleaved as a signal peptide. At 21-443 (APPPCRCMTS…NTGPWGLLSQ (423 aa)) the chain is on the extracellular side. N-linked (GlcNAc...) asparagine glycosylation is present at N169. The short motif at 186 to 189 (CWIC) is the CXXC element. 3 cysteine pairs are disulfide-bonded: C186–C189, C186–C405, and C397–C404. N208, N214, N234, N242, and N281 each carry an N-linked (GlcNAc...) asparagine glycan. Positions 320–340 (ILPFVIGAGVLGALGTGIGGI) are fusion peptide. The tract at residues 380-396 (LQNRRALDLLTAERGGT) is immunosuppression. The CX6CC signature appears at 397–406 (CLFLGEECCY). An N-linked (GlcNAc...) asparagine glycan is attached at N409. Residues 444 to 464 (WMPWILPFLGPLAAIILLLLF) traverse the membrane as a helical segment. The essential for the fusiogenic function stretch occupies residues 465–484 (GPCIFNLLVNFVSSRIEAVK). Residues 465 to 538 (GPCIFNLLVN…LLRPNSAGSS (74 aa)) lie on the Cytoplasmic side of the membrane. The interval 496 to 538 (KIYRRPLDRPASPRSDVNDIKGTPPEEISAAQPLLRPNSAGSS) is disordered.

Belongs to the gamma type-C retroviral envelope protein family. HERV class-I W env subfamily. In terms of assembly, the mature envelope protein (Env) consists of a trimer of SU-TM heterodimers attached probably by a labile interchain disulfide bond. Interacts with the C-type lectin CD209/DC-SIGN. Specific enzymatic cleavages in vivo yield mature proteins. Envelope glycoproteins are synthesized as an inactive precursor that is heavily N-glycosylated and processed likely by furin in the Golgi to yield the mature SU and TM proteins. The cleavage site between SU and TM requires the minimal sequence [KR]-X-[KR]-R. The intracytoplasmic tail cleavage by the viral protease that is required for the fusiogenic activity of some retroviruses envelope proteins seems to have been lost during evolution. Post-translationally, the CXXC motif is highly conserved across a broad range of retroviral envelope proteins. It is thought to participate in the formation of a labile disulfide bond possibly with the CX6CC motif present in the transmembrane protein. Isomerization of the intersubunit disulfide bond to an SU intrachain disulfide bond is thought to occur upon receptor recognition in order to allow membrane fusion. As to expression, expressed at higher level in placental syncytiotrophoblast. Expressed at intermediate level in testis. Seems also to be found at low level in adrenal tissue, bone marrow, breast, colon, kidney, ovary, prostate, skin, spleen, thymus, thyroid, brain and trachea. Both mRNA and protein levels are significantly increased in the brain of individuals with multiple sclerosis, particularly in astrocytes and microglia.

The protein localises to the cell membrane. It localises to the virion. Functionally, this endogenous retroviral envelope protein has retained its original fusogenic properties and participates in trophoblast fusion and the formation of a syncytium during placenta morphogenesis. May induce fusion through binding of SLC1A4 and SLC1A5. Endogenous envelope proteins may have kept, lost or modified their original function during evolution. Retroviral envelope proteins mediate receptor recognition and membrane fusion during early infection. The surface protein (SU) mediates receptor recognition, while the transmembrane protein (TM) acts as a class I viral fusion protein. The protein may have at least 3 conformational states: pre-fusion native state, pre-hairpin intermediate state, and post-fusion hairpin state. During viral and target cell membrane fusion, the coiled coil regions (heptad repeats) assume a trimer-of-hairpins structure, positioning the fusion peptide in close proximity to the C-terminal region of the ectodomain. The formation of this structure appears to drive apposition and subsequent fusion of membranes. This Homo sapiens (Human) protein is Syncytin-1 (ERVW-1).